Here is a 126-residue protein sequence, read N- to C-terminus: Ribosome-binding factor A (126 aa).

Belongs to the RbfA family. Monomer. Binds 30S ribosomal subunits, but not 50S ribosomal subunits or 70S ribosomes.

The protein localises to the cytoplasm. Its function is as follows. One of several proteins that assist in the late maturation steps of the functional core of the 30S ribosomal subunit. Associates with free 30S ribosomal subunits (but not with 30S subunits that are part of 70S ribosomes or polysomes). Required for efficient processing of 16S rRNA. May interact with the 5'-terminal helix region of 16S rRNA. This is Ribosome-binding factor A from Haemophilus ducreyi (strain 35000HP / ATCC 700724).